The primary structure comprises 796 residues: DNA damage-responsive transcriptional repressor RPH1 (796 aa).

Positions 14–55 (VPVFKPTYEQFEDFYAYCKAINKYGMKSGVVKVIPPKEWKDK) constitute a JmjN domain. A JmjC domain is found at 193–355 (PEGLNVWNVA…IGKKAGKCHC (163 aa)). T399 is modified (phosphothreonine). S430, S459, S557, S561, S575, and S584 each carry phosphoserine. The Bipartite nuclear localization signal motif lies at 455–471 (KRISSFQEQPLNKLLKR). A disordered region spans residues 599–692 (RQQHSQQHSF…DKEQGSSPLN (94 aa)). Positions 601 to 621 (QHSQQHSFSTPSTVSNLSTSV) are enriched in polar residues. Residues 629–640 (NDIKTPHPERPN) show a composition bias toward basic and acidic residues. S652 is modified (phosphoserine). The span at 654–669 (VETSKSNLILSKVAST) shows a compositional bias: polar residues. Residues 670–686 (RQEDSFTSRNDDLDKEQ) show a composition bias toward basic and acidic residues. A Phosphoserine modification is found at S689. Residues 709-732 (YICKECQRKFSSGHHLTRHKKSVH) form a C2H2-type 1 zinc finger. A C2H2-type 2; atypical zinc finger spans residues 738 to 763 (HSCPKCGKRFKRRDHVLQHLNKKIPC). The disordered stretch occupies residues 774–796 (IMNPTVQPQDGKAAINQQSTPLN).

Post-translationally, RAD53-dependent phosphorylated in response to DNA damage.

The protein localises to the nucleus. Functionally, transcriptional repressor of photolyase PHR1. Recognizes and binds the sequence AG(4) in the upstream repressing sequence of PHR1. Derepresses PHR1 transcription when phosphorylated. The polypeptide is DNA damage-responsive transcriptional repressor RPH1 (RPH1) (Saccharomyces cerevisiae (strain ATCC 204508 / S288c) (Baker's yeast)).